We begin with the raw amino-acid sequence, 223 residues long: Putative N-acetylmannosamine-6-phosphate 2-epimerase (223 aa).

It belongs to the NanE family.

The enzyme catalyses an N-acyl-D-glucosamine 6-phosphate = an N-acyl-D-mannosamine 6-phosphate. The protein operates within amino-sugar metabolism; N-acetylneuraminate degradation; D-fructose 6-phosphate from N-acetylneuraminate: step 3/5. In terms of biological role, converts N-acetylmannosamine-6-phosphate (ManNAc-6-P) to N-acetylglucosamine-6-phosphate (GlcNAc-6-P). This chain is Putative N-acetylmannosamine-6-phosphate 2-epimerase, found in Clostridioides difficile (strain 630) (Peptoclostridium difficile).